Reading from the N-terminus, the 700-residue chain is MKIFSVRQTVLPALLVLSPVVFAADEQTMIVSAAPQVVSELDTPAAVSVVDGEEMRLATPRINLSESLTGVPGLQVQNRQNYAQDLQLSIRGFGSRSTYGIRGIRLYVDGIPATMPDGQGQTSNIDLSSVQNVEVLRGPFSALYGNASGGVMNVTTQTGQQPPTIEASSYYGSFGSWRYGLKATGATGDGTQPGDVDYTVSTTRFTTHGYRDHSGAQKNLANAKLGVRIDEASKLSLIFNSVDIKADDPGGLTKAEWKANPQQAPRAEQYDTRKTIKQTQAGLRYERSLSSRDDMSVMMYAGERETTQYQSIPMAPQLNPSHAGGVITLQRHYQGIDSRWTHRGELGVPVTFTTGLNYENMSENRKGYNNFRLNSGMPEYGQKGELRRDERNLMWNIDPYLQTQWQLSEKLSLDAGVRYSSVWFDSNDHYVTPGNGDDSGDASYHKWLPAGSLKYAMTDAWNIYLAAGRGFETPTINELSYRADGQSGMNLGLKPSTNDTIEIGSKTRIGDGLLSLALFQTDTDDEIVVDSSSGGRTTYKNAGKTRRQGAELAWDQRFAGDFRVNASWTWLDATYRSNVCNEQDCNGNRMPGIARNMGFASIGYVPEDGWYAGTEARYMGDIMADDENTAKAPSYTLVGLFTGYKYNYHNLTVDLFGRVDNLFDKEYVGSVIVNESNGRYYEPSPGRNYGVGMNIAWRFE.

The signal sequence occupies residues Met1–Ala23. A TBDR plug domain is found at Ser39 to Gln157. A run of 24 beta stranded transmembrane segments spans residues Asn132 to Leu136, Gly150 to Gln160, Pro162 to Tyr171, Trp177 to Ala186, Asp195 to Arg204, Leu220 to Val227, Ser233 to Ser241, Gln280 to Ser288, Met295 to Ala301, Gly335 to Gly344, Val350 to Tyr358, Asp398 to Trp405, Leu411 to Tyr419, Trp447 to Ala456, Tyr464 to Gly468, Thr500 to Ile509, Asp511 to Gln520, Gly549 to Gln556, Arg563 to Trp570, Met597 to Tyr604, Tyr611 to Arg617, Leu637 to Asn647, Leu651 to Val659, and Tyr689 to Trp697. The region spanning Pro162–Trp697 is the TBDR beta-barrel domain. The TonB C-terminal box signature appears at Tyr680–Glu700.

The protein belongs to the TonB-dependent receptor family.

It localises to the cell outer membrane. Functionally, mediates the TonB-dependent high affinity transport across the outer membrane of pyrroloquinoline quinone (PQQ), a redox cofactor required for the activity of Gcd and Asd dehydrogenases. The uptake process is energised via the TonB-ExbBD complex. Not involved in the transport of an iron-containing substrate under laboratory conditions. In Escherichia coli (strain K12), this protein is Pyrroloquinoline quinone transporter.